Consider the following 320-residue polypeptide: Cytochrome c biogenesis protein CcsA (320 aa).

7 helical membrane-spanning segments follow: residues 13-33 (ISFS…FLLV), 46-66 (GMIV…IYSG), 73-93 (LYES…VSYL), 147-167 (MVLG…LLVI), 226-246 (IISL…VWAN), 259-274 (ETWA…IYFH), and 289-309 (VASM…LLGI).

This sequence belongs to the CcmF/CycK/Ccl1/NrfE/CcsA family. In terms of assembly, may interact with Ccs1.

It is found in the plastid. It localises to the chloroplast thylakoid membrane. Its function is as follows. Required during biogenesis of c-type cytochromes (cytochrome c6 and cytochrome f) at the step of heme attachment. The polypeptide is Cytochrome c biogenesis protein CcsA (Gossypium barbadense (Sea Island cotton)).